The chain runs to 627 residues: F-box only protein 21 (627 aa).

The F-box domain maps to 27 to 76 (PSCLVQLPGEVLEYILCSGSLTALDIGRVSSTCRRLREVCQSSGQVWKEQ).

As to quaternary structure, directly interacts with SKP1 and CUL1.

Functionally, substrate-recognition component of the SCF (SKP1-CUL1-F-box protein)-type E3 ubiquitin ligase complex. The polypeptide is F-box only protein 21 (Fbxo21) (Mus musculus (Mouse)).